The chain runs to 593 residues: UvrABC system protein C (593 aa).

The region spanning 14 to 91 (DKPGCYLMKN…IKEHDPRYNV (78 aa)) is the GIY-YIG domain. The region spanning 196 to 231 (EEMKQTLTEKMLQAAENMEFERAKEYRDQIKSIEAV) is the UVR domain.

It belongs to the UvrC family. In terms of assembly, interacts with UvrB in an incision complex.

The protein resides in the cytoplasm. Functionally, the UvrABC repair system catalyzes the recognition and processing of DNA lesions. UvrC both incises the 5' and 3' sides of the lesion. The N-terminal half is responsible for the 3' incision and the C-terminal half is responsible for the 5' incision. The chain is UvrABC system protein C from Brevibacillus brevis (strain 47 / JCM 6285 / NBRC 100599).